Consider the following 539-residue polypeptide: uncharacterized protein (539 aa).

2 ABC transporter domains span residues 9-276 and 288-536; these read LEVK…EFKK and IKLE…QEMF. ATP-binding positions include 41 to 48 and 325 to 332; these read GKSGAGKS and GTSGAGKT.

It belongs to the ABC transporter superfamily.

This is an uncharacterized protein from Methanocaldococcus jannaschii (strain ATCC 43067 / DSM 2661 / JAL-1 / JCM 10045 / NBRC 100440) (Methanococcus jannaschii).